A 151-amino-acid chain; its full sequence is Small ribosomal subunit protein uS15 (151 aa).

This sequence belongs to the universal ribosomal protein uS15 family.

This is Small ribosomal subunit protein uS15 (RpS13) from Plutella xylostella (Diamondback moth).